The chain runs to 427 residues: Peptidase B (427 aa).

Positions 195 and 200 each coordinate Mn(2+). The active site involves Lys207. Mn(2+)-binding residues include Asp218, Asp277, and Glu279. Arg281 is a catalytic residue.

Belongs to the peptidase M17 family. Homohexamer. It depends on Mn(2+) as a cofactor.

The protein localises to the cytoplasm. The enzyme catalyses Release of an N-terminal amino acid, Xaa, from a peptide or arylamide. Xaa is preferably Glu or Asp but may be other amino acids, including Leu, Met, His, Cys and Gln.. Probably plays an important role in intracellular peptide degradation. The polypeptide is Peptidase B (Salmonella dublin (strain CT_02021853)).